Here is a 185-residue protein sequence, read N- to C-terminus: Guanosine deaminase (185 aa).

The CMP/dCMP-type deaminase domain maps to 28–142 (DSDHKFLTQA…AAIAIGFDDF (115 aa)). Residue H80 participates in Zn(2+) binding. E82 acts as the Proton donor in catalysis. Residues C110 and C113 each contribute to the Zn(2+) site.

The protein belongs to the cytidine and deoxycytidylate deaminase family. In terms of tissue distribution, expressed in roots, leaves, flowers and siliques.

The protein localises to the cytoplasm. It localises to the nucleus. It catalyses the reaction guanosine + H2O + H(+) = xanthosine + NH4(+). Catalyzes the hydrolytic deamination of guanosine, producing xanthosine and ammonia. Deaminates exclusively guanosine and 2'-deoxyguanosine but no other aminated purines, pyrimidines, or pterines. Deamination of guanosine by GSDA is the only source of xanthosine production in Arabidopsis. This is Guanosine deaminase from Arabidopsis thaliana (Mouse-ear cress).